A 329-amino-acid polypeptide reads, in one-letter code: Phosphate acyltransferase (329 aa).

Belongs to the PlsX family. Homodimer. Probably interacts with PlsY.

Its subcellular location is the cytoplasm. The enzyme catalyses a fatty acyl-[ACP] + phosphate = an acyl phosphate + holo-[ACP]. Its pathway is lipid metabolism; phospholipid metabolism. Functionally, catalyzes the reversible formation of acyl-phosphate (acyl-PO(4)) from acyl-[acyl-carrier-protein] (acyl-ACP). This enzyme utilizes acyl-ACP as fatty acyl donor, but not acyl-CoA. The sequence is that of Phosphate acyltransferase from Campylobacter fetus subsp. fetus (strain 82-40).